Here is a 279-residue protein sequence, read N- to C-terminus: Putative E3 ubiquitin-protein ligase C36B7.05c (279 aa).

Residues 27–122 (DDESAQCNNC…VCVNCRQQLS (96 aa)) form an FYVE-type zinc finger. Positions 33, 36, 49, 52, 57, 60, 114, and 117 each coordinate Zn(2+). Position 200 is a phosphoserine (S200). The RING-type; atypical zinc finger occupies 230–273 (CIICFEEFAAGDRVARIEYCLCIFHLKCYRDWLSTGAAGCPVHA).

Its subcellular location is the cytoplasm. The protein resides in the nucleus. It localises to the endosome membrane. The protein localises to the vacuole membrane. It carries out the reaction S-ubiquitinyl-[E2 ubiquitin-conjugating enzyme]-L-cysteine + [acceptor protein]-L-lysine = [E2 ubiquitin-conjugating enzyme]-L-cysteine + N(6)-ubiquitinyl-[acceptor protein]-L-lysine.. Its pathway is protein modification; protein ubiquitination. In terms of biological role, functions as an E3 ubiquitin-protein ligase. Binds phospholipid vesicles containing phosphatidylinositol 3-phosphate. The polypeptide is Putative E3 ubiquitin-protein ligase C36B7.05c (Schizosaccharomyces pombe (strain 972 / ATCC 24843) (Fission yeast)).